The chain runs to 637 residues: Putative pentatricopeptide repeat-containing protein At5g65820 (637 aa).

PPR repeat units lie at residues 146–180, 182–216, 217–247, 251–285, 286–320, 321–355, 356–390, 391–425, 426–460, 461–495, 498–532, and 534–568; these read SIEV…NPQL, EPEL…GFEP, DEYV…MRMR, NLRY…GFEP, DIVD…GFEP, NANC…ECEA, DVVT…GLMP, SELT…EYHP, DIGI…GLSP, GVDT…GLFS, QYGT…GACE, and NVLS…DFMP. Over residues 616–630 the composition is skewed to basic and acidic residues; sequence QDLTEKAKSKQDREG. Positions 616–637 are disordered; it reads QDLTEKAKSKQDREGKKKQRSR.

Belongs to the PPR family. P subfamily.

The sequence is that of Putative pentatricopeptide repeat-containing protein At5g65820 from Arabidopsis thaliana (Mouse-ear cress).